A 370-amino-acid chain; its full sequence is Phospho-2-dehydro-3-deoxyheptonate aldolase, tyrosine-inhibited (370 aa).

Belongs to the class-I DAHP synthase family.

The catalysed reaction is D-erythrose 4-phosphate + phosphoenolpyruvate + H2O = 7-phospho-2-dehydro-3-deoxy-D-arabino-heptonate + phosphate. The protein operates within metabolic intermediate biosynthesis; chorismate biosynthesis; chorismate from D-erythrose 4-phosphate and phosphoenolpyruvate: step 1/7. Its activity is regulated as follows. Inhibited by tyrosine. Stereospecific condensation of phosphoenolpyruvate (PEP) and D-erythrose-4-phosphate (E4P) giving rise to 3-deoxy-D-arabino-heptulosonate-7-phosphate (DAHP). The protein is Phospho-2-dehydro-3-deoxyheptonate aldolase, tyrosine-inhibited (ARO4) of Candida albicans (strain SC5314 / ATCC MYA-2876) (Yeast).